The following is a 112-amino-acid chain: DNA-binding protein Memar_1972 (112 aa).

Positions 14–35 (MEQMQRQAMDQQGMEEEAARQQ) are disordered.

It belongs to the PDCD5 family.

This is DNA-binding protein Memar_1972 from Methanoculleus marisnigri (strain ATCC 35101 / DSM 1498 / JR1).